Consider the following 1761-residue polypeptide: Lysine-specific demethylase 3B (1761 aa).

Alanine 2 carries the N-acetylalanine modification. The segment at 253-346 (DNSAPQSEGG…QRAKQPPSTF (94 aa)) is disordered. Over residues 298 to 309 (ASKKLKGDRGEV) the composition is skewed to basic and acidic residues. Position 361 is an N6-acetyllysine (lysine 361). Disordered stretches follow at residues 370–394 (QDEPVGGDTPASFTPYSTATGQTPL) and 438–496 (DTGL…NGVL). Composition is skewed to polar residues over residues 380 to 392 (ASFTPYSTATGQT), 453 to 468 (SRSQASGENSRNSILA), and 477 to 495 (PSSSQPLTFGSGRSQSNGV). A phosphoserine mark is found at serine 492, serine 546, serine 556, and serine 560. The segment at 572-603 (RSVLGTDTKPGSKAGSSVDRKVPAESMPTLTP) is disordered. A Phosphothreonine modification is found at threonine 614. Positions 714 to 762 (GPSLSAMGNGRSSSPTSSLTQPIEMPTLSSSPTEERPTVGPGQQDNPLL) are disordered. Positions 723–745 (GRSSSPTSSLTQPIEMPTLSSSP) are enriched in polar residues. A phosphoserine mark is found at serine 766, serine 773, serine 778, and serine 779. A Glycyl lysine isopeptide (Lys-Gly) (interchain with G-Cter in SUMO2) cross-link involves residue lysine 788. Residue serine 798 is modified to Phosphoserine. Residues 805-827 (ACRQDSDSSTNSDLSDLSDSEEQ) form a disordered region. Residues 1031-1056 (CDVCETTLFNIHWVCRKCGFGVCLDC) form a C6-type zinc finger. Residues 1142-1161 (GMSQLPSINPSASSGNETTF) are compositionally biased toward polar residues. Residues 1142-1220 (GMSQLPSINP…PCPDTAPPSS (79 aa)) are disordered. Residues 1174–1193 (EPDHVPKADSTDIRSEEPLK) are compositionally biased toward basic and acidic residues. Positions 1194 to 1204 (TDSSASNSNSE) are enriched in polar residues. A phosphoserine mark is found at serine 1253 and serine 1259. Residues 1293-1297 (LRDLL) carry the LXXLL motif motif. One can recognise a JmjC domain in the interval 1498–1721 (MPTRFEDLME…HCFRLTQEFR (224 aa)). Residues histidine 1560, aspartate 1562, and histidine 1689 each contribute to the Fe cation site.

Belongs to the JHDM2 histone demethylase family. Requires Fe(2+) as cofactor. Ubiquitous. Highly expressed in placenta, skeletal muscle, kidney, heart and liver.

The protein resides in the nucleus. It carries out the reaction N(6),N(6)-dimethyl-L-lysyl(9)-[histone H3] + 2 2-oxoglutarate + 2 O2 = L-lysyl(9)-[histone H3] + 2 formaldehyde + 2 succinate + 2 CO2. Histone demethylase that specifically demethylates 'Lys-9' of histone H3, thereby playing a central role in histone code. Demethylation of Lys residue generates formaldehyde and succinate. May have tumor suppressor activity. This is Lysine-specific demethylase 3B (KDM3B) from Homo sapiens (Human).